The chain runs to 403 residues: Creatinase (403 aa).

H232 is an active-site residue.

It belongs to the peptidase M24 family. Creatinase subfamily. Homodimer.

The enzyme catalyses creatine + H2O = sarcosine + urea. The polypeptide is Creatinase (Flavobacterium sp. (strain U-188)).